Reading from the N-terminus, the 602-residue chain is Elongation factor 4 (602 aa).

The 183-residue stretch at 6–188 folds into the tr-type G domain; it reads DRIRNFCIIA…RIVRDVPPPG (183 aa). GTP-binding positions include 18-23 and 135-138; these read DHGKST and NKID.

It belongs to the TRAFAC class translation factor GTPase superfamily. Classic translation factor GTPase family. LepA subfamily.

It is found in the cell membrane. The catalysed reaction is GTP + H2O = GDP + phosphate + H(+). In terms of biological role, required for accurate and efficient protein synthesis under certain stress conditions. May act as a fidelity factor of the translation reaction, by catalyzing a one-codon backward translocation of tRNAs on improperly translocated ribosomes. Back-translocation proceeds from a post-translocation (POST) complex to a pre-translocation (PRE) complex, thus giving elongation factor G a second chance to translocate the tRNAs correctly. Binds to ribosomes in a GTP-dependent manner. In Desulforudis audaxviator (strain MP104C), this protein is Elongation factor 4.